The chain runs to 310 residues: Pantothenate kinase (310 aa).

ATP is bound at residue 95–102 (GSVAVGKS).

Belongs to the prokaryotic pantothenate kinase family.

The protein resides in the cytoplasm. The enzyme catalyses (R)-pantothenate + ATP = (R)-4'-phosphopantothenate + ADP + H(+). Its pathway is cofactor biosynthesis; coenzyme A biosynthesis; CoA from (R)-pantothenate: step 1/5. The protein is Pantothenate kinase of Rhodococcus jostii (strain RHA1).